The primary structure comprises 747 residues: Protein O-mannosyl-transferase 1 (747 aa).

Transmembrane regions (helical) follow at residues Pro8–Leu28, Val40–Phe60, Phe68–Trp88, Val99–Ala119, Ile122–Ile142, Leu154–Phe174, Ser183–Ile203, Met206–Leu226, and Leu269–Phe289. 3 consecutive MIR domains span residues Pro318–Pro381, Pro392–Val449, and Ser453–His513. Residues Asn435, Asn471, and Asn539 are each glycosylated (N-linked (GlcNAc...) asparagine). 3 helical membrane passes run Ile597–Tyr617, Trp636–Leu656, and Leu661–Leu681.

The protein belongs to the glycosyltransferase 39 family. Interacts with POMT2. In terms of tissue distribution, widely expressed. Highly expressed in testis, heart and pancreas. Detected at lower levels in kidney, skeletal muscle, brain, placenta, lung and liver.

It localises to the endoplasmic reticulum membrane. The enzyme catalyses a di-trans,poly-cis-dolichyl beta-D-mannosyl phosphate + L-seryl-[protein] = 3-O-(alpha-D-mannosyl)-L-seryl-[protein] + a di-trans,poly-cis-dolichyl phosphate + H(+). It catalyses the reaction a di-trans,poly-cis-dolichyl beta-D-mannosyl phosphate + L-threonyl-[protein] = 3-O-(alpha-D-mannosyl)-L-threonyl-[protein] + a di-trans,poly-cis-dolichyl phosphate + H(+). It participates in protein modification; protein glycosylation. Its activity is regulated as follows. Slightly activated by Mg(2+) and inhibited by both Ca(+) and Mn(2+). EDTA ha no effect on activity in vitro. In terms of biological role, transfers mannosyl residues to the hydroxyl group of serine or threonine residues. Coexpression of both POMT1 and POMT2 is necessary for enzyme activity, expression of either POMT1 or POMT2 alone is insufficient. Essentially dedicated to O-mannosylation of alpha-DAG1 and few other proteins but not of cadherins and protocaherins. The sequence is that of Protein O-mannosyl-transferase 1 (POMT1) from Homo sapiens (Human).